Here is a 753-residue protein sequence, read N- to C-terminus: 5-methyltetrahydropteroyltriglutamate--homocysteine methyltransferase (753 aa).

5-methyltetrahydropteroyltri-L-glutamate contacts are provided by residues 17–20 (RELK) and lysine 117. L-homocysteine-binding positions include 431 to 433 (IGS) and glutamate 484. Residues 431 to 433 (IGS) and glutamate 484 contribute to the L-methionine site. 5-methyltetrahydropteroyltri-L-glutamate contacts are provided by residues 515–516 (RC) and tryptophan 561. Aspartate 599 contacts L-homocysteine. L-methionine is bound at residue aspartate 599. Glutamate 605 contributes to the 5-methyltetrahydropteroyltri-L-glutamate binding site. Residues histidine 641, cysteine 643, and glutamate 665 each coordinate Zn(2+). Histidine 694 acts as the Proton donor in catalysis. A Zn(2+)-binding site is contributed by cysteine 726.

The protein belongs to the vitamin-B12 independent methionine synthase family. The cofactor is Zn(2+).

The catalysed reaction is 5-methyltetrahydropteroyltri-L-glutamate + L-homocysteine = tetrahydropteroyltri-L-glutamate + L-methionine. It functions in the pathway amino-acid biosynthesis; L-methionine biosynthesis via de novo pathway; L-methionine from L-homocysteine (MetE route): step 1/1. Its function is as follows. Catalyzes the transfer of a methyl group from 5-methyltetrahydrofolate to homocysteine resulting in methionine formation. The chain is 5-methyltetrahydropteroyltriglutamate--homocysteine methyltransferase from Escherichia coli (strain UTI89 / UPEC).